Reading from the N-terminus, the 68-residue chain is Amphipathic peptide CT1 (68 aa).

The first 23 residues, 1–23 (MKTQIVILIVAVLFLQLVSQSDA), serve as a signal peptide directing secretion. Leucine amide is present on Leu36. Positions 40-68 (GLKNLDQYNDLFDGEISDADIKFLKDLMR) are excised as a propeptide.

This sequence belongs to the non-disulfide-bridged peptide (NDBP) superfamily. Short antimicrobial peptide (group 4) family. In terms of tissue distribution, expressed by the venom gland.

It localises to the secreted. Its subcellular location is the target cell membrane. Functionally, amphipathic peptide that shows no antibacterial activity even at 50 uM but shows a low hemolytic activity against human erythrocytes. The polypeptide is Amphipathic peptide CT1 (Mesomexovis subcristatus (Scorpion)).